Here is a 346-residue protein sequence, read N- to C-terminus: Sensor histidine kinase GraS (346 aa).

2 helical membrane passes run 15-35 (MNWI…SLID) and 43-63 (LFYI…LTYF). The 207-residue stretch at 126-332 (EFVHDIKTPV…TVRLIFPLQN (207 aa)) folds into the Histidine kinase domain.

In terms of assembly, interacts with GraX.

The protein resides in the cell membrane. The enzyme catalyses ATP + protein L-histidine = ADP + protein N-phospho-L-histidine.. Functionally, member of the two-component regulatory system GraR/GraS involved in resistance against cationic antimicrobial peptides (CAMPs). Functions as a sensor protein kinase which phosphorylates GraR through the auxiliary protein GraX. In turn, GraR up-regulates many genes such as adhesins, exoproteins, transporters, toxins, and proteins involved in cell wall synthesis. Down-regulates the expression of many genes involved in RNA and amino acid synthesis or glycolysis. The protein is Sensor histidine kinase GraS (graS) of Staphylococcus aureus (strain Mu50 / ATCC 700699).